We begin with the raw amino-acid sequence, 349 residues long: Holliday junction branch migration complex subunit RuvB (349 aa).

The segment at 1-186 (MSEDYLDRDV…FGFTAHMDFY (186 aa)) is large ATPase domain (RuvB-L). ATP-binding positions include L25, R26, G67, K70, T71, S72, 133-135 (EDF), R176, Y186, and R223. T71 contacts Mg(2+). Residues 187-257 (EPTELEGVLA…VAKAALAVYD (71 aa)) form a small ATPAse domain (RuvB-S) region. The head domain (RuvB-H) stretch occupies residues 260–349 (ELGLDRLDRA…GLSQPGLFES (90 aa)). Residues R315 and R320 each contribute to the DNA site.

This sequence belongs to the RuvB family. As to quaternary structure, homohexamer. Forms an RuvA(8)-RuvB(12)-Holliday junction (HJ) complex. HJ DNA is sandwiched between 2 RuvA tetramers; dsDNA enters through RuvA and exits via RuvB. An RuvB hexamer assembles on each DNA strand where it exits the tetramer. Each RuvB hexamer is contacted by two RuvA subunits (via domain III) on 2 adjacent RuvB subunits; this complex drives branch migration. In the full resolvosome a probable DNA-RuvA(4)-RuvB(12)-RuvC(2) complex forms which resolves the HJ.

The protein localises to the cytoplasm. It carries out the reaction ATP + H2O = ADP + phosphate + H(+). Its function is as follows. The RuvA-RuvB-RuvC complex processes Holliday junction (HJ) DNA during genetic recombination and DNA repair, while the RuvA-RuvB complex plays an important role in the rescue of blocked DNA replication forks via replication fork reversal (RFR). RuvA specifically binds to HJ cruciform DNA, conferring on it an open structure. The RuvB hexamer acts as an ATP-dependent pump, pulling dsDNA into and through the RuvAB complex. RuvB forms 2 homohexamers on either side of HJ DNA bound by 1 or 2 RuvA tetramers; 4 subunits per hexamer contact DNA at a time. Coordinated motions by a converter formed by DNA-disengaged RuvB subunits stimulates ATP hydrolysis and nucleotide exchange. Immobilization of the converter enables RuvB to convert the ATP-contained energy into a lever motion, pulling 2 nucleotides of DNA out of the RuvA tetramer per ATP hydrolyzed, thus driving DNA branch migration. The RuvB motors rotate together with the DNA substrate, which together with the progressing nucleotide cycle form the mechanistic basis for DNA recombination by continuous HJ branch migration. Branch migration allows RuvC to scan DNA until it finds its consensus sequence, where it cleaves and resolves cruciform DNA. The sequence is that of Holliday junction branch migration complex subunit RuvB from Mycobacterium leprae (strain Br4923).